Here is a 165-residue protein sequence, read N- to C-terminus: Phosphopantetheine adenylyltransferase (165 aa).

Threonine 9 contacts substrate. Residues 9 to 10 and histidine 17 each bind ATP; that span reads TF. Positions 41, 73, and 87 each coordinate substrate. ATP is bound by residues 88–90, glutamate 98, and 123–129; these read GLR and YQFISGT.

This sequence belongs to the bacterial CoaD family. Homohexamer. Mg(2+) is required as a cofactor.

It is found in the cytoplasm. The catalysed reaction is (R)-4'-phosphopantetheine + ATP + H(+) = 3'-dephospho-CoA + diphosphate. Its pathway is cofactor biosynthesis; coenzyme A biosynthesis; CoA from (R)-pantothenate: step 4/5. In terms of biological role, reversibly transfers an adenylyl group from ATP to 4'-phosphopantetheine, yielding dephospho-CoA (dPCoA) and pyrophosphate. This is Phosphopantetheine adenylyltransferase from Polynucleobacter necessarius subsp. necessarius (strain STIR1).